Here is a 110-residue protein sequence, read N- to C-terminus: Large ribosomal subunit protein uL22 (110 aa).

It belongs to the universal ribosomal protein uL22 family. In terms of assembly, part of the 50S ribosomal subunit.

Functionally, this protein binds specifically to 23S rRNA; its binding is stimulated by other ribosomal proteins, e.g. L4, L17, and L20. It is important during the early stages of 50S assembly. It makes multiple contacts with different domains of the 23S rRNA in the assembled 50S subunit and ribosome. Its function is as follows. The globular domain of the protein is located near the polypeptide exit tunnel on the outside of the subunit, while an extended beta-hairpin is found that lines the wall of the exit tunnel in the center of the 70S ribosome. The chain is Large ribosomal subunit protein uL22 from Histophilus somni (strain 2336) (Haemophilus somnus).